The chain runs to 81 residues: MTMSLEVFEKLEAKVQQAIDTITLLQMEIEELKEKNNSLSQEVQNAQHQREELERENNHLKEQQNGWQERLQALLGRMEEV.

The stretch at 5 to 81 (LEVFEKLEAK…QALLGRMEEV (77 aa)) forms a coiled coil. Lys-10 carries the post-translational modification N6-acetyllysine. The disordered stretch occupies residues 36-67 (NNSLSQEVQNAQHQREELERENNHLKEQQNGW). Residues 37–47 (NSLSQEVQNAQ) show a composition bias toward polar residues. Positions 48–62 (HQREELERENNHLKE) are enriched in basic and acidic residues.

Belongs to the ZapB family. Homodimer. The ends of the coiled-coil dimer bind to each other, forming polymers. Interacts with FtsZ.

The protein resides in the cytoplasm. Its function is as follows. Non-essential, abundant cell division factor that is required for proper Z-ring formation. It is recruited early to the divisome by direct interaction with FtsZ, stimulating Z-ring assembly and thereby promoting cell division earlier in the cell cycle. Its recruitment to the Z-ring requires functional FtsA or ZipA. This chain is Cell division protein ZapB, found in Shigella boydii serotype 4 (strain Sb227).